Reading from the N-terminus, the 426-residue chain is 3-phosphoshikimate 1-carboxyvinyltransferase (426 aa).

Residues Lys-22, Ser-23, and Arg-27 each coordinate 3-phosphoshikimate. Lys-22 contributes to the phosphoenolpyruvate binding site. Phosphoenolpyruvate is bound by residues Gly-96 and Arg-124. Residues Ser-170, Ser-171, Gln-172, Ser-198, Asp-314, Asn-337, and Lys-341 each contribute to the 3-phosphoshikimate site. Phosphoenolpyruvate is bound at residue Gln-172. Asp-314 acts as the Proton acceptor in catalysis. Phosphoenolpyruvate contacts are provided by Arg-345, Arg-387, and Lys-412.

Belongs to the EPSP synthase family. In terms of assembly, monomer.

The protein resides in the cytoplasm. It carries out the reaction 3-phosphoshikimate + phosphoenolpyruvate = 5-O-(1-carboxyvinyl)-3-phosphoshikimate + phosphate. It participates in metabolic intermediate biosynthesis; chorismate biosynthesis; chorismate from D-erythrose 4-phosphate and phosphoenolpyruvate: step 6/7. Its function is as follows. Catalyzes the transfer of the enolpyruvyl moiety of phosphoenolpyruvate (PEP) to the 5-hydroxyl of shikimate-3-phosphate (S3P) to produce enolpyruvyl shikimate-3-phosphate and inorganic phosphate. This is 3-phosphoshikimate 1-carboxyvinyltransferase from Shewanella oneidensis (strain ATCC 700550 / JCM 31522 / CIP 106686 / LMG 19005 / NCIMB 14063 / MR-1).